The chain runs to 629 residues: Embryonic polyadenylate-binding protein A (629 aa).

RRM domains are found at residues 11–89 (ASLY…WSQR), 99–175 (GNVF…HFKS), 191–268 (TNVY…RAQK), and 294–370 (VNLY…LAQR). A PABC domain is found at 539–616 (QEPLTASLLA…AVAVLQAHQA (78 aa)).

It belongs to the polyadenylate-binding protein type-1 family. As to quaternary structure, interacts with dazl in an RNA-independent manner. The C-terminus can self-associate and also interact with the C-terminus of pabpc1, independently of RNA. RRM 1 and RRM 2 interact with both eif4g1 and paip1, and the C-terminus also interacts with paip1. Prior to oocyte maturation, found in a complex with dazl and pum2 proteins and spdy1 mRNA; pum2 dissociates from the complex during maturation. Interacts with the translation termination factor sup35/erf3. As to expression, expressed in adult testis, but at a reduced level compared to oocytes.

Its subcellular location is the cytoplasm. In terms of biological role, binds and protects the poly(A) tail of mRNA with or without an AU-rich element (ARE) and prevents mRNA deadenylation. Stimulates the translation of mRNAs to which it is bound during early development. The protein is Embryonic polyadenylate-binding protein A (epabp-a) of Xenopus laevis (African clawed frog).